The sequence spans 373 residues: 2-aminoethylphosphonate--pyruvate transaminase (373 aa).

Lysine 191 is subject to N6-(pyridoxal phosphate)lysine.

This sequence belongs to the class-V pyridoxal-phosphate-dependent aminotransferase family. PhnW subfamily. In terms of assembly, homodimer. Pyridoxal 5'-phosphate is required as a cofactor.

It catalyses the reaction (2-aminoethyl)phosphonate + pyruvate = phosphonoacetaldehyde + L-alanine. In terms of biological role, involved in phosphonate degradation. In Burkholderia ambifaria (strain MC40-6), this protein is 2-aminoethylphosphonate--pyruvate transaminase.